Here is a 225-residue protein sequence, read N- to C-terminus: Biosynthetic peptidoglycan transglycosylase (225 aa).

A helical transmembrane segment spans residues 8-28; that stretch reads VLLIFIGAILLIQLWIFSSLV.

The protein belongs to the glycosyltransferase 51 family.

Its subcellular location is the cell inner membrane. It catalyses the reaction [GlcNAc-(1-&gt;4)-Mur2Ac(oyl-L-Ala-gamma-D-Glu-L-Lys-D-Ala-D-Ala)](n)-di-trans,octa-cis-undecaprenyl diphosphate + beta-D-GlcNAc-(1-&gt;4)-Mur2Ac(oyl-L-Ala-gamma-D-Glu-L-Lys-D-Ala-D-Ala)-di-trans,octa-cis-undecaprenyl diphosphate = [GlcNAc-(1-&gt;4)-Mur2Ac(oyl-L-Ala-gamma-D-Glu-L-Lys-D-Ala-D-Ala)](n+1)-di-trans,octa-cis-undecaprenyl diphosphate + di-trans,octa-cis-undecaprenyl diphosphate + H(+). It functions in the pathway cell wall biogenesis; peptidoglycan biosynthesis. Its function is as follows. Peptidoglycan polymerase that catalyzes glycan chain elongation from lipid-linked precursors. This Acinetobacter baumannii (strain AB307-0294) protein is Biosynthetic peptidoglycan transglycosylase.